A 474-amino-acid chain; its full sequence is 3-isopropylmalate dehydratase large subunit (474 aa).

The [4Fe-4S] cluster site is built by C355, C415, and C418.

Belongs to the aconitase/IPM isomerase family. LeuC type 1 subfamily. Heterodimer of LeuC and LeuD. Requires [4Fe-4S] cluster as cofactor.

The catalysed reaction is (2R,3S)-3-isopropylmalate = (2S)-2-isopropylmalate. It participates in amino-acid biosynthesis; L-leucine biosynthesis; L-leucine from 3-methyl-2-oxobutanoate: step 2/4. Catalyzes the isomerization between 2-isopropylmalate and 3-isopropylmalate, via the formation of 2-isopropylmaleate. The polypeptide is 3-isopropylmalate dehydratase large subunit (Shewanella sp. (strain ANA-3)).